Here is an 89-residue protein sequence, read N- to C-terminus: Small ribosomal subunit protein uS14 (89 aa).

This sequence belongs to the universal ribosomal protein uS14 family. As to quaternary structure, part of the 30S ribosomal subunit. Contacts proteins S3 and S10.

Functionally, binds 16S rRNA, required for the assembly of 30S particles and may also be responsible for determining the conformation of the 16S rRNA at the A site. The chain is Small ribosomal subunit protein uS14 from Chloroherpeton thalassium (strain ATCC 35110 / GB-78).